The primary structure comprises 59 residues: Conotoxin Sr5.4 (59 aa).

Positions 1–22 (MRCLPVFVILLLLIASAPSVDA) are cleaved as a signal peptide. Positions 23–44 (QLKTKDDVPLASFHDNAKGTQH) are excised as a propeptide.

The protein belongs to the conotoxin T superfamily. Post-translationally, contains 2 disulfide bonds that can be either 'C1-C3, C2-C4' or 'C1-C4, C2-C3', since these disulfide connectivities have been observed for conotoxins with cysteine framework V (for examples, see AC P0DQQ7 and AC P81755). In terms of tissue distribution, expressed by the venom duct.

The protein localises to the secreted. The protein is Conotoxin Sr5.4 of Conus spurius (Alphabet cone).